The chain runs to 227 residues: Cytidylate kinase (227 aa).

Residue 12–20 (GPSGAGKGT) coordinates ATP.

The protein belongs to the cytidylate kinase family. Type 1 subfamily.

It localises to the cytoplasm. The catalysed reaction is CMP + ATP = CDP + ADP. It catalyses the reaction dCMP + ATP = dCDP + ADP. The chain is Cytidylate kinase from Erwinia tasmaniensis (strain DSM 17950 / CFBP 7177 / CIP 109463 / NCPPB 4357 / Et1/99).